Here is a 310-residue protein sequence, read N- to C-terminus: Malate dehydrogenase (310 aa).

Residues 7–12 and aspartate 32 contribute to the NAD(+) site; that span reads GAGHVG. Residues arginine 81 and arginine 87 each coordinate substrate. NAD(+) is bound by residues asparagine 94 and 117 to 119; that span reads VSN. Substrate-binding residues include asparagine 119 and arginine 150. Residue histidine 174 is the Proton acceptor of the active site.

Belongs to the LDH/MDH superfamily. MDH type 3 family.

The enzyme catalyses (S)-malate + NAD(+) = oxaloacetate + NADH + H(+). Its function is as follows. Catalyzes the reversible oxidation of malate to oxaloacetate. The polypeptide is Malate dehydrogenase (Chlorobium phaeobacteroides (strain BS1)).